We begin with the raw amino-acid sequence, 239 residues long: Protein canopy homolog 4 (239 aa).

A signal peptide spans 1-20 (MGPVRLGTLLFILTVYGAWA). 3 cysteine pairs are disulfide-bonded: Cys-37/Cys-195, Cys-40/Cys-183, and Cys-93/Cys-155. Residues 199-239 (TWTGKEKITDGQEKTEEEEQDQEEEEMTNTPVHSQHDPEDL) are disordered. The segment covering 201 to 212 (TGKEKITDGQEK) has biased composition (basic and acidic residues). Acidic residues predominate over residues 213 to 225 (TEEEEQDQEEEEM).

This sequence belongs to the canopy family. As to quaternary structure, interacts with TLR4.

It localises to the secreted. In terms of biological role, plays a role in the regulation of the cell surface expression of TLR4. In Bos taurus (Bovine), this protein is Protein canopy homolog 4 (CNPY4).